A 551-amino-acid polypeptide reads, in one-letter code: Membrane protein insertase YidC (551 aa).

The chain crosses the membrane as a helical span at residues 3–23 (ANHIRILLLVTIAIMLISLMG). Residues 30–43 (PSNSSQSQTTQTQQ) are compositionally biased toward low complexity. The interval 30 to 61 (PSNSSQSQTTQTQQDNSHYNSDTPATTNVSTS) is disordered. Polar residues predominate over residues 44–61 (DNSHYNSDTPATTNVSTS). The next 3 helical transmembrane spans lie at 361–381 (LVGN…LIFY), 431–451 (LSGC…YWVL), and 504–524 (IMMF…SGLV).

It belongs to the OXA1/ALB3/YidC family. Type 1 subfamily. In terms of assembly, interacts with the Sec translocase complex via SecD. Specifically interacts with transmembrane segments of nascent integral membrane proteins during membrane integration.

Its subcellular location is the cell inner membrane. Functionally, required for the insertion and/or proper folding and/or complex formation of integral membrane proteins into the membrane. Involved in integration of membrane proteins that insert both dependently and independently of the Sec translocase complex, as well as at least some lipoproteins. Aids folding of multispanning membrane proteins. The protein is Membrane protein insertase YidC of Francisella philomiragia subsp. philomiragia (strain ATCC 25017 / CCUG 19701 / FSC 153 / O#319-036).